Here is a 285-residue protein sequence, read N- to C-terminus: Tryptophan synthase alpha chain (285 aa).

Residues Glu53 and Asp64 each act as proton acceptor in the active site.

Belongs to the TrpA family. Tetramer of two alpha and two beta chains.

It catalyses the reaction (1S,2R)-1-C-(indol-3-yl)glycerol 3-phosphate + L-serine = D-glyceraldehyde 3-phosphate + L-tryptophan + H2O. It participates in amino-acid biosynthesis; L-tryptophan biosynthesis; L-tryptophan from chorismate: step 5/5. In terms of biological role, the alpha subunit is responsible for the aldol cleavage of indoleglycerol phosphate to indole and glyceraldehyde 3-phosphate. The sequence is that of Tryptophan synthase alpha chain from Bordetella bronchiseptica (strain ATCC BAA-588 / NCTC 13252 / RB50) (Alcaligenes bronchisepticus).